Reading from the N-terminus, the 303-residue chain is Cilia- and flagella-associated protein 161 (303 aa).

Microtubule inner protein component of sperm flagellar doublet microtubules.

The protein resides in the cytoplasm. It is found in the cytoskeleton. Its subcellular location is the cilium axoneme. It localises to the flagellum axoneme. Functionally, microtubule inner protein (MIP) part of the dynein-decorated doublet microtubules (DMTs) in cilia axoneme, which is required for motile cilia beating. In Mus musculus (Mouse), this protein is Cilia- and flagella-associated protein 161.